The chain runs to 356 residues: Dual-specificity RNA methyltransferase RlmN (356 aa).

Glutamate 92 (proton acceptor) is an active-site residue. One can recognise a Radical SAM core domain in the interval 98 to 327 (EKNRGTLCIS…HQGIRTMTRR (230 aa)). Cysteine 105 and cysteine 337 are disulfide-bonded. The [4Fe-4S] cluster site is built by cysteine 112, cysteine 116, and cysteine 119. Residues 162–163 (GE), serine 194, 216–218 (SLH), and asparagine 294 each bind S-adenosyl-L-methionine. The S-methylcysteine intermediate role is filled by cysteine 337.

This sequence belongs to the radical SAM superfamily. RlmN family. [4Fe-4S] cluster serves as cofactor.

Its subcellular location is the cytoplasm. The catalysed reaction is adenosine(2503) in 23S rRNA + 2 reduced [2Fe-2S]-[ferredoxin] + 2 S-adenosyl-L-methionine = 2-methyladenosine(2503) in 23S rRNA + 5'-deoxyadenosine + L-methionine + 2 oxidized [2Fe-2S]-[ferredoxin] + S-adenosyl-L-homocysteine. The enzyme catalyses adenosine(37) in tRNA + 2 reduced [2Fe-2S]-[ferredoxin] + 2 S-adenosyl-L-methionine = 2-methyladenosine(37) in tRNA + 5'-deoxyadenosine + L-methionine + 2 oxidized [2Fe-2S]-[ferredoxin] + S-adenosyl-L-homocysteine. Functionally, specifically methylates position 2 of adenine 2503 in 23S rRNA and position 2 of adenine 37 in tRNAs. m2A2503 modification seems to play a crucial role in the proofreading step occurring at the peptidyl transferase center and thus would serve to optimize ribosomal fidelity. The sequence is that of Dual-specificity RNA methyltransferase RlmN from Ruthia magnifica subsp. Calyptogena magnifica.